The following is a 162-amino-acid chain: Phosphopantetheine adenylyltransferase (162 aa).

Threonine 10 contributes to the substrate binding site. ATP is bound by residues 10 to 11 (TF) and histidine 18. 3 residues coordinate substrate: lysine 42, leucine 74, and arginine 88. ATP is bound by residues 89 to 91 (GLR), glutamate 99, and 124 to 130 (NSFISST).

It belongs to the bacterial CoaD family. In terms of assembly, homohexamer. Mg(2+) is required as a cofactor.

It is found in the cytoplasm. It carries out the reaction (R)-4'-phosphopantetheine + ATP + H(+) = 3'-dephospho-CoA + diphosphate. Its pathway is cofactor biosynthesis; coenzyme A biosynthesis; CoA from (R)-pantothenate: step 4/5. Reversibly transfers an adenylyl group from ATP to 4'-phosphopantetheine, yielding dephospho-CoA (dPCoA) and pyrophosphate. The polypeptide is Phosphopantetheine adenylyltransferase (Alteromonas mediterranea (strain DSM 17117 / CIP 110805 / LMG 28347 / Deep ecotype)).